Here is a 576-residue protein sequence, read N- to C-terminus: Sulfite reductase [NADPH] hemoprotein beta-component (576 aa).

[4Fe-4S] cluster contacts are provided by Cys435, Cys441, Cys480, and Cys484. Siroheme is bound at residue Cys484.

The protein belongs to the nitrite and sulfite reductase 4Fe-4S domain family. Alpha(8)-beta(8). The alpha component is a flavoprotein, the beta component is a hemoprotein. Siroheme is required as a cofactor. [4Fe-4S] cluster serves as cofactor.

The enzyme catalyses hydrogen sulfide + 3 NADP(+) + 3 H2O = sulfite + 3 NADPH + 4 H(+). It functions in the pathway sulfur metabolism; hydrogen sulfide biosynthesis; hydrogen sulfide from sulfite (NADPH route): step 1/1. Functionally, component of the sulfite reductase complex that catalyzes the 6-electron reduction of sulfite to sulfide. This is one of several activities required for the biosynthesis of L-cysteine from sulfate. The protein is Sulfite reductase [NADPH] hemoprotein beta-component of Yersinia pseudotuberculosis serotype O:1b (strain IP 31758).